Consider the following 655-residue polypeptide: Probable alpha-galactosidase D (655 aa).

The signal sequence occupies residues 1-16; it reads MLPKIFYLSLLPAALG. N-linked (GlcNAc...) asparagine glycosylation is found at N47 and N91. A disulfide bridge links C124 with C155. Catalysis depends on D153, which acts as the Nucleophile. N-linked (GlcNAc...) asparagine glycans are attached at residues N180 and N189. 198–202 lines the substrate pocket; the sequence is EWGID. D220 serves as the catalytic Proton donor. N349, N436, N458, N503, N537, N541, and N580 each carry an N-linked (GlcNAc...) asparagine glycan.

This sequence belongs to the glycosyl hydrolase 27 family.

The protein resides in the secreted. The catalysed reaction is Hydrolysis of terminal, non-reducing alpha-D-galactose residues in alpha-D-galactosides, including galactose oligosaccharides, galactomannans and galactolipids.. In terms of biological role, hydrolyzes a variety of simple alpha-D-galactoside as well as more complex molecules such as oligosaccharides and polysaccharides. This is Probable alpha-galactosidase D (aglD) from Aspergillus flavus (strain ATCC 200026 / FGSC A1120 / IAM 13836 / NRRL 3357 / JCM 12722 / SRRC 167).